The following is a 396-amino-acid chain: Cytochrome c biogenesis protein Ccs1 (396 aa).

The next 3 helical transmembrane spans lie at 22–42, 79–99, and 162–182; these read LKFS…GTII, SNFY…CSLK, and AGPL…AIHA.

The protein belongs to the Ccs1/CcsB family. As to quaternary structure, may interact with CcsA.

The protein localises to the plastid. It localises to the chloroplast thylakoid membrane. In terms of biological role, required during biogenesis of c-type cytochromes (cytochrome c6 and cytochrome f) at the step of heme attachment. This chain is Cytochrome c biogenesis protein Ccs1, found in Cyanidium caldarium (Red alga).